The following is a 365-amino-acid chain: Deoxyribonuclease-2-alpha (365 aa).

A signal peptide spans 1–19 (MATLSSLLLTALLWVPVGT). Cysteine 22 and cysteine 162 are oxidised to a cystine. 3 N-linked (GlcNAc...) asparagine glycosylation sites follow: asparagine 215, asparagine 269, and asparagine 293. 2 disulfide bridges follow: cysteine 270–cysteine 348 and cysteine 311–cysteine 330. Histidine 298 is a catalytic residue.

The protein belongs to the DNase II family.

The protein resides in the lysosome. It catalyses the reaction Endonucleolytic cleavage to nucleoside 3'-phosphates and 3'-phosphooligonucleotide end-products.. In terms of biological role, hydrolyzes DNA under acidic conditions with a preference for double-stranded DNA. Plays a major role in the clearance of nucleic acids generated through apoptosis, hence preventing autoinflammation. Necessary for proper fetal development and for definitive erythropoiesis in fetal liver and bone marrow, where it degrades nuclear DNA expelled from erythroid precursor cells. This chain is Deoxyribonuclease-2-alpha (DNASE2), found in Bos taurus (Bovine).